Consider the following 391-residue polypeptide: Mannose-6-phosphate isomerase (391 aa).

Residues Gln-97, His-99, Glu-134, and His-255 each contribute to the Zn(2+) site. Residue Arg-274 is part of the active site. The residue at position 280 (Lys-280) is an N6-acetyllysine.

The protein belongs to the mannose-6-phosphate isomerase type 1 family. It depends on Zn(2+) as a cofactor.

It is found in the cytoplasm. It carries out the reaction D-mannose 6-phosphate = D-fructose 6-phosphate. Its function is as follows. Involved in the conversion of glucose to GDP-L-fucose, which can be converted to L-fucose, a capsular polysaccharide. The chain is Mannose-6-phosphate isomerase (manA) from Shigella flexneri.